A 122-amino-acid chain; its full sequence is RxLR effector protein Avh52 (122 aa).

The first 21 residues, 1–21 (MRLTSILVLVIAATFHTTGTA), serve as a signal peptide directing secretion. Positions 50–68 (RLLRRVEKDKVDYEQDEQR) match the RxLR-dEER motif. Residues 69–86 (SFGALKDAVKKLNPVTAV) form a TAP1-binding region. The tract at residues 87-98 (KKFFKQRARRKK) is nuclear localization signal (NLS).

This sequence belongs to the RxLR effector family. In terms of assembly, interacts with host acetyl transferase TAP1.

The protein resides in the secreted. Its subcellular location is the host nucleus. Its function is as follows. Effector that suppresses plant defense responses during the early stages of pathogen infection. Suppresses cell death induced by effectors and PAMPs in plant hosts. Interacts with host acetyltransferase TAP1 and causes TAP1 relocation into the nucleus where it acetylates histones H2A and H3 during early infection, thereby promoting susceptibility of host plant to P.sojae. The sequence is that of RxLR effector protein Avh52 from Phytophthora sojae (Soybean stem and root rot agent).